Consider the following 261-residue polypeptide: Guanine nucleotide exchange factor BopE (261 aa).

Belongs to the GEF (guanine exchange factor) SopE family. In terms of assembly, monomer. Interacts with human CDC42.

It localises to the secreted. In terms of biological role, activator for both CDC42 and RAC1 by directly interacting with these Rho GTPases and acting as a guanine nucleotide exchange factor (GEF). This activation results in actin cytoskeleton rearrangements and stimulates membrane ruffling, thus promoting bacterial entry into non-phagocytic cells. The protein is Guanine nucleotide exchange factor BopE (bopE) of Burkholderia mallei (strain NCTC 10247).